A 487-amino-acid chain; its full sequence is Serine carboxypeptidase-like 38 (487 aa).

Residues M1–A20 form the signal peptide. 3 disulfide bridges follow: C119/C368, C280/C290, and C315/C336. The active site involves S215. The N-linked (GlcNAc...) asparagine glycan is linked to N233. N317 and N357 each carry an N-linked (GlcNAc...) asparagine glycan. D407 is an active-site residue. N-linked (GlcNAc...) asparagine glycans are attached at residues N423 and N449. Residue H460 is part of the active site.

This sequence belongs to the peptidase S10 family. Expressed in seedlings, roots, leaves, flowers and siliques.

Its subcellular location is the secreted. Its function is as follows. Probable carboxypeptidase. In Arabidopsis thaliana (Mouse-ear cress), this protein is Serine carboxypeptidase-like 38 (SCPL38).